The following is a 417-amino-acid chain: NADH-quinone oxidoreductase subunit D (417 aa).

Belongs to the complex I 49 kDa subunit family. As to quaternary structure, NDH-1 is composed of 14 different subunits. Subunits NuoB, C, D, E, F, and G constitute the peripheral sector of the complex.

It localises to the cell membrane. The catalysed reaction is a quinone + NADH + 5 H(+)(in) = a quinol + NAD(+) + 4 H(+)(out). Functionally, NDH-1 shuttles electrons from NADH, via FMN and iron-sulfur (Fe-S) centers, to quinones in the respiratory chain. The immediate electron acceptor for the enzyme in this species is believed to be ubiquinone. Couples the redox reaction to proton translocation (for every two electrons transferred, four hydrogen ions are translocated across the cytoplasmic membrane), and thus conserves the redox energy in a proton gradient. The chain is NADH-quinone oxidoreductase subunit D from Polynucleobacter asymbioticus (strain DSM 18221 / CIP 109841 / QLW-P1DMWA-1) (Polynucleobacter necessarius subsp. asymbioticus).